The primary structure comprises 356 residues: 4-hydroxy-3-methylbut-2-en-1-yl diphosphate synthase (flavodoxin) (356 aa).

[4Fe-4S] cluster-binding residues include C262, C265, C297, and E304.

This sequence belongs to the IspG family. The cofactor is [4Fe-4S] cluster.

The catalysed reaction is (2E)-4-hydroxy-3-methylbut-2-enyl diphosphate + oxidized [flavodoxin] + H2O + 2 H(+) = 2-C-methyl-D-erythritol 2,4-cyclic diphosphate + reduced [flavodoxin]. The protein operates within isoprenoid biosynthesis; isopentenyl diphosphate biosynthesis via DXP pathway; isopentenyl diphosphate from 1-deoxy-D-xylulose 5-phosphate: step 5/6. Its function is as follows. Converts 2C-methyl-D-erythritol 2,4-cyclodiphosphate (ME-2,4cPP) into 1-hydroxy-2-methyl-2-(E)-butenyl 4-diphosphate. The protein is 4-hydroxy-3-methylbut-2-en-1-yl diphosphate synthase (flavodoxin) of Campylobacter fetus subsp. fetus (strain 82-40).